The primary structure comprises 396 residues: 1-deoxy-D-xylulose 5-phosphate reductoisomerase (396 aa).

Positions 10, 11, 12, 13, 38, and 124 each coordinate NADPH. Lysine 125 contributes to the 1-deoxy-D-xylulose 5-phosphate binding site. Residue glutamate 126 participates in NADPH binding. Aspartate 150 contacts Mn(2+). Serine 151, glutamate 152, serine 179, and histidine 202 together coordinate 1-deoxy-D-xylulose 5-phosphate. Glutamate 152 serves as a coordination point for Mn(2+). Glycine 208 lines the NADPH pocket. Positions 215, 220, 221, and 224 each coordinate 1-deoxy-D-xylulose 5-phosphate. Position 224 (glutamate 224) interacts with Mn(2+).

The protein belongs to the DXR family. The cofactor is Mg(2+). It depends on Mn(2+) as a cofactor.

It carries out the reaction 2-C-methyl-D-erythritol 4-phosphate + NADP(+) = 1-deoxy-D-xylulose 5-phosphate + NADPH + H(+). It participates in isoprenoid biosynthesis; isopentenyl diphosphate biosynthesis via DXP pathway; isopentenyl diphosphate from 1-deoxy-D-xylulose 5-phosphate: step 1/6. Catalyzes the NADPH-dependent rearrangement and reduction of 1-deoxy-D-xylulose-5-phosphate (DXP) to 2-C-methyl-D-erythritol 4-phosphate (MEP). The protein is 1-deoxy-D-xylulose 5-phosphate reductoisomerase of Ralstonia pickettii (strain 12J).